Here is a 125-residue protein sequence, read N- to C-terminus: uncharacterized protein (125 aa).

Belongs to the HesB/IscA family.

This is an uncharacterized protein from Azospirillum brasilense.